Here is a 334-residue protein sequence, read N- to C-terminus: Protein-methionine-sulfoxide reductase catalytic subunit MsrP (334 aa).

Positions methionine 1–alanine 44 form a signal peptide, tat-type signal. Mo-molybdopterin-binding positions include asparagine 88, tyrosine 91 to glutamate 92, cysteine 146, threonine 181, asparagine 233, arginine 238, and glycine 249 to lysine 251.

This sequence belongs to the MsrP family. As to quaternary structure, heterodimer of a catalytic subunit (MsrP) and a heme-binding subunit (MsrQ). It depends on Mo-molybdopterin as a cofactor. Predicted to be exported by the Tat system. The position of the signal peptide cleavage has not been experimentally proven.

Its subcellular location is the periplasm. It carries out the reaction L-methionyl-[protein] + a quinone + H2O = L-methionyl-(S)-S-oxide-[protein] + a quinol. The enzyme catalyses L-methionyl-[protein] + a quinone + H2O = L-methionyl-(R)-S-oxide-[protein] + a quinol. Functionally, part of the MsrPQ system that repairs oxidized periplasmic proteins containing methionine sulfoxide residues (Met-O), using respiratory chain electrons. Thus protects these proteins from oxidative-stress damage caused by reactive species of oxygen and chlorine generated by the host defense mechanisms. MsrPQ is essential for the maintenance of envelope integrity under bleach stress, rescuing a wide series of structurally unrelated periplasmic proteins from methionine oxidation. The catalytic subunit MsrP is non-stereospecific, being able to reduce both (R-) and (S-) diastereoisomers of methionine sulfoxide. This Cronobacter sakazakii (strain ATCC BAA-894) (Enterobacter sakazakii) protein is Protein-methionine-sulfoxide reductase catalytic subunit MsrP.